A 51-amino-acid chain; its full sequence is Large ribosomal subunit protein bL33 (51 aa).

The interval 1–23 (MREKIKLESSAGTGHFYTTTKNK) is disordered. The span at 10–20 (SAGTGHFYTTT) shows a compositional bias: polar residues.

The protein belongs to the bacterial ribosomal protein bL33 family.

In Methylobacillus flagellatus (strain ATCC 51484 / DSM 6875 / VKM B-1610 / KT), this protein is Large ribosomal subunit protein bL33.